Consider the following 404-residue polypeptide: Beta-ketoacyl-[acyl-carrier-protein] synthase III, chloroplastic (404 aa).

The N-terminal 43 residues, 1-43, are a transit peptide targeting the chloroplast; sequence MANASGFFTHPSIPNLRSRIHVPVRVSGSGFCVSNRFSKRVLC. Active-site residues include cysteine 179, histidine 330, and asparagine 360.

This sequence belongs to the thiolase-like superfamily. FabH family.

The protein resides in the plastid. It localises to the chloroplast. The enzyme catalyses malonyl-[ACP] + acetyl-CoA + H(+) = 3-oxobutanoyl-[ACP] + CO2 + CoA. It participates in lipid metabolism; fatty acid biosynthesis. Catalyzes the condensation reaction of fatty acid synthesis by the addition to an acyl acceptor of two carbons from malonyl-ACP. KAS III catalyzes the first condensation reaction which initiates fatty acid synthesis and may therefore play a role in governing the total rate of fatty acid production. Possesses both acetoacetyl-ACP synthase and acetyl transacylase activities. The polypeptide is Beta-ketoacyl-[acyl-carrier-protein] synthase III, chloroplastic (Arabidopsis thaliana (Mouse-ear cress)).